The chain runs to 258 residues: Hydroxyacylglutathione hydrolase (258 aa).

Zn(2+)-binding residues include H55, H57, D59, H60, H115, D132, and H170.

Belongs to the metallo-beta-lactamase superfamily. Glyoxalase II family. As to quaternary structure, monomer. Zn(2+) is required as a cofactor.

The enzyme catalyses an S-(2-hydroxyacyl)glutathione + H2O = a 2-hydroxy carboxylate + glutathione + H(+). It participates in secondary metabolite metabolism; methylglyoxal degradation; (R)-lactate from methylglyoxal: step 2/2. In terms of biological role, thiolesterase that catalyzes the hydrolysis of S-D-lactoyl-glutathione to form glutathione and D-lactic acid. This Shewanella denitrificans (strain OS217 / ATCC BAA-1090 / DSM 15013) protein is Hydroxyacylglutathione hydrolase.